A 500-amino-acid polypeptide reads, in one-letter code: Beta-glucosidase 28 (500 aa).

The signal sequence occupies residues 1-24 (MDRRLLLSALLFIALACSSNRVHG). Residue glutamine 45 coordinates a beta-D-glucoside. N-linked (GlcNAc...) asparagine glycosylation is present at asparagine 111. Residues histidine 146 and 191–192 (NE) contribute to the a beta-D-glucoside site. The active-site Proton donor is glutamate 192. A disulfide bridge links cysteine 211 with cysteine 219. Tyrosine 337 is a binding site for a beta-D-glucoside. Asparagine 362 carries an N-linked (GlcNAc...) asparagine glycan. Glutamate 408 lines the a beta-D-glucoside pocket. The active-site Nucleophile is glutamate 408. 3 N-linked (GlcNAc...) asparagine glycosylation sites follow: asparagine 409, asparagine 415, and asparagine 416. A beta-D-glucoside contacts are provided by residues tryptophan 457, 464–465 (EF), and phenylalanine 473.

Belongs to the glycosyl hydrolase 1 family.

It catalyses the reaction Hydrolysis of terminal, non-reducing beta-D-glucosyl residues with release of beta-D-glucose.. The protein is Beta-glucosidase 28 (BGLU28) of Oryza sativa subsp. japonica (Rice).